Here is a 447-residue protein sequence, read N- to C-terminus: MAGKGNPVPGPHLNGFPVPTYSYFFPHMLGSLSPPALPGLPISGYSTPSPATIETQSTSSEEIVPSPPSPPPPPRVYKPCFVCQDKSSGYHYGVSACEGCKGFFRRSIQKNMVYTCHREKNCIINKVTRNRCQYCRLQKCLEVGMSKESVRNDRNKKKKDEKKPECIENYVLSPDTEQMINRVRKAHQETFPSLCQLGKYTTTNSSERRVALDVDLWDKFSELSTKCIIKTVEFAKQLPGFVTLTIADQITLLKAACLDILILRICTRYTPEQDTMTFSDGLTLNRTQMHNAGFGPLTDLVFAFANQLLPLEMDDAETGLLSAICLLCGDRQDLEQAEKVDILQEPLLEALKIYVRRRRPHKPHMFPKMLMKITDLRSISAKGAERVITLKMEIPGSMPPLIQEMLENSEGLESGATGSRPSGAPPGSCSPSLSPSSAQSSPPTQSP.

Residues 1-79 are modulating; that stretch reads MAGKGNPVPG…PPPPPRVYKP (79 aa). The span at 47 to 61 shows a compositional bias: polar residues; that stretch reads TPSPATIETQSTSSE. Positions 47-72 are disordered; it reads TPSPATIETQSTSSEEIVPSPPSPPP. 2 consecutive NR C4-type zinc fingers follow at residues 80-100 and 116-140; these read CFVC…CEGC and CHRE…LQKC. Positions 80–145 form a DNA-binding region, nuclear receptor; that stretch reads CFVCQDKSSG…RLQKCLEVGM (66 aa). A hinge region spans residues 146–174; sequence SKESVRNDRNKKKKDEKKPECIENYVLSP. The NR LBD domain occupies 175–409; that stretch reads DTEQMINRVR…PLIQEMLENS (235 aa). The 9aaTAD signature appears at 400 to 408; it reads PLIQEMLEN. Residues 407 to 447 are disordered; the sequence is ENSEGLESGATGSRPSGAPPGSCSPSLSPSSAQSSPPTQSP. The segment covering 414–447 has biased composition (low complexity); sequence SGATGSRPSGAPPGSCSPSLSPSSAQSSPPTQSP.

Belongs to the nuclear hormone receptor family. NR1 subfamily. Heterodimer; with an rxr molecule. Binds DNA preferentially as a rar/rxr heterodimer.

The protein resides in the nucleus. In terms of biological role, receptor for retinoic acid. Retinoic acid receptors bind as heterodimers to their target response elements in response to their ligands, all-trans or 9-cis retinoic acid, and regulate gene expression in various biological processes. The rar/rxr heterodimers bind to the retinoic acid response elements (RARE) composed of tandem 5'-AGGTCA-3' sites known as DR1-DR5. The chain is Retinoic acid receptor alpha (rara) from Takifugu rubripes (Japanese pufferfish).